Reading from the N-terminus, the 370-residue chain is tRNA 2-selenouridine synthase (370 aa).

A Rhodanese domain is found at 12 to 136 (FLDDVPMMDM…MRTFLLETTQ (125 aa)). Cys-95 (S-selanylcysteine intermediate) is an active-site residue.

This sequence belongs to the SelU family. In terms of assembly, monomer.

The catalysed reaction is 5-methylaminomethyl-2-thiouridine(34) in tRNA + selenophosphate + (2E)-geranyl diphosphate + H2O + H(+) = 5-methylaminomethyl-2-selenouridine(34) in tRNA + (2E)-thiogeraniol + phosphate + diphosphate. It carries out the reaction 5-methylaminomethyl-2-thiouridine(34) in tRNA + (2E)-geranyl diphosphate = 5-methylaminomethyl-S-(2E)-geranyl-thiouridine(34) in tRNA + diphosphate. It catalyses the reaction 5-methylaminomethyl-S-(2E)-geranyl-thiouridine(34) in tRNA + selenophosphate + H(+) = 5-methylaminomethyl-2-(Se-phospho)selenouridine(34) in tRNA + (2E)-thiogeraniol. The enzyme catalyses 5-methylaminomethyl-2-(Se-phospho)selenouridine(34) in tRNA + H2O = 5-methylaminomethyl-2-selenouridine(34) in tRNA + phosphate. Functionally, involved in the post-transcriptional modification of the uridine at the wobble position (U34) of tRNA(Lys), tRNA(Glu) and tRNA(Gln). Catalyzes the conversion of 2-thiouridine (S2U-RNA) to 2-selenouridine (Se2U-RNA). Acts in a two-step process involving geranylation of 2-thiouridine (S2U) to S-geranyl-2-thiouridine (geS2U) and subsequent selenation of the latter derivative to 2-selenouridine (Se2U) in the tRNA chain. The sequence is that of tRNA 2-selenouridine synthase from Pseudomonas putida (strain ATCC 700007 / DSM 6899 / JCM 31910 / BCRC 17059 / LMG 24140 / F1).